The chain runs to 257 residues: MTRFRPCIDLHAGQVKQIVGGTLDSATSELRTNFVSPHPPAYFAKLYRDNDLSGAHVIMLGPGNKEAALESLKAWPGGLQVGGGITDANAREWVEAGAEKVIITSYLFPNGKFSQSHLDAVLAALDGDKSKLVIDLSCRRQGDDRWFVAMNKWQTITDMEVSEESIKALEPYCSEFLIHAADNEGLQKGIDEKLVQRLSEWCSIPVTYAGGGRNLEDLETVKRLSGGKVDLTIGSALDCFGGKGVTLQECVEWNRRQ.

This sequence belongs to the HisA/HisF family.

The protein localises to the cytoplasm. The enzyme catalyses 1-(5-phospho-beta-D-ribosyl)-5-[(5-phospho-beta-D-ribosylamino)methylideneamino]imidazole-4-carboxamide = 5-[(5-phospho-1-deoxy-D-ribulos-1-ylimino)methylamino]-1-(5-phospho-beta-D-ribosyl)imidazole-4-carboxamide. Its pathway is amino-acid biosynthesis; L-histidine biosynthesis; L-histidine from 5-phospho-alpha-D-ribose 1-diphosphate: step 4/9. The chain is 1-(5-phosphoribosyl)-5-[(5-phosphoribosylamino)methylideneamino] imidazole-4-carboxamide isomerase (his-7) from Neurospora crassa (strain ATCC 24698 / 74-OR23-1A / CBS 708.71 / DSM 1257 / FGSC 987).